The primary structure comprises 550 residues: Phosphomannomutase (550 aa).

The active-site Phosphoserine intermediate is Ser-148. Mg(2+) contacts are provided by Ser-148, Asp-300, Asp-302, and Asp-304.

It belongs to the phosphohexose mutase family. It depends on Mg(2+) as a cofactor.

It carries out the reaction alpha-D-mannose 1-phosphate = D-mannose 6-phosphate. The chain is Phosphomannomutase (manB) from Mycoplasma genitalium (strain ATCC 33530 / DSM 19775 / NCTC 10195 / G37) (Mycoplasmoides genitalium).